A 226-amino-acid chain; its full sequence is Large ribosomal subunit protein uL3 (226 aa).

Belongs to the universal ribosomal protein uL3 family. As to quaternary structure, part of the 50S ribosomal subunit. Forms a cluster with proteins L14 and L19.

One of the primary rRNA binding proteins, it binds directly near the 3'-end of the 23S rRNA, where it nucleates assembly of the 50S subunit. In Sulfurihydrogenibium sp. (strain YO3AOP1), this protein is Large ribosomal subunit protein uL3.